A 401-amino-acid polypeptide reads, in one-letter code: Tyrosine--tRNA ligase (401 aa).

Residues 42–51 carry the 'HIGH' region motif; it reads PTAPDLHLGH. Positions 226–230 match the 'KMSKS' region motif; the sequence is KMSKS. Lys-229 contributes to the ATP binding site. The S4 RNA-binding domain occupies 336–397; the sequence is IALAQLLKQI…GKRRIAKLSI (62 aa).

It belongs to the class-I aminoacyl-tRNA synthetase family. TyrS type 2 subfamily. Homodimer.

It is found in the cytoplasm. The enzyme catalyses tRNA(Tyr) + L-tyrosine + ATP = L-tyrosyl-tRNA(Tyr) + AMP + diphosphate + H(+). Its function is as follows. Catalyzes the attachment of tyrosine to tRNA(Tyr) in a two-step reaction: tyrosine is first activated by ATP to form Tyr-AMP and then transferred to the acceptor end of tRNA(Tyr). In Legionella pneumophila (strain Paris), this protein is Tyrosine--tRNA ligase.